Consider the following 267-residue polypeptide: Hydroxyethylthiazole kinase (267 aa).

M42 provides a ligand contact to substrate. Residues C118 and T162 each coordinate ATP. G189 serves as a coordination point for substrate.

Belongs to the Thz kinase family. Mg(2+) serves as cofactor.

The enzyme catalyses 5-(2-hydroxyethyl)-4-methylthiazole + ATP = 4-methyl-5-(2-phosphooxyethyl)-thiazole + ADP + H(+). It participates in cofactor biosynthesis; thiamine diphosphate biosynthesis; 4-methyl-5-(2-phosphoethyl)-thiazole from 5-(2-hydroxyethyl)-4-methylthiazole: step 1/1. In terms of biological role, catalyzes the phosphorylation of the hydroxyl group of 4-methyl-5-beta-hydroxyethylthiazole (THZ). This chain is Hydroxyethylthiazole kinase, found in Rubrobacter xylanophilus (strain DSM 9941 / JCM 11954 / NBRC 16129 / PRD-1).